Here is a 119-residue protein sequence, read N- to C-terminus: Integration host factor subunit beta (119 aa).

The interval 91–119 (DLVGNDQGDDSSNGSSDPLQSVMDMHAMH) is disordered. A compositionally biased stretch (low complexity) spans 94 to 107 (GNDQGDDSSNGSSD).

It belongs to the bacterial histone-like protein family. As to quaternary structure, heterodimer of an alpha and a beta chain.

Functionally, this protein is one of the two subunits of integration host factor, a specific DNA-binding protein that functions in genetic recombination as well as in transcriptional and translational control. The protein is Integration host factor subunit beta of Bordetella parapertussis (strain 12822 / ATCC BAA-587 / NCTC 13253).